We begin with the raw amino-acid sequence, 461 residues long: Diacylglycerol O-acyltransferase 1 (461 aa).

Residues 1–38 (MQDSMDDSLREAEGRQDDSEVSSGTTLGSSTPEDSGVT) are disordered. Residues 1–112 (MQDSMDDSLR…TLVVAWHTSS (112 aa)) lie on the Cytoplasmic side of the membrane. A compositionally biased stretch (basic and acidic residues) spans 7-18 (DSLREAEGRQDD). The span at 21-33 (VSSGTTLGSSTPE) shows a compositional bias: polar residues. The helical transmembrane segment at 113 to 133 (FIYMTVLVLFLAANPLMWWFM) threads the bilayer. At 134 to 230 (VPYMVYYVWN…ARPQVATGPR (97 aa)) the chain is on the lumenal side. Residues 231–251 (YIFGYHPHGVGALGAFGAIAT) traverse the membrane as a helical segment. The Cytoplasmic portion of the chain corresponds to 252–258 (EGCNWSK). A helical transmembrane segment spans residues 259-279 (VFAGIPACLCTLVNQFQIPIY). The Lumenal portion of the chain corresponds to 280–332 (RDYLLGLGCTSVARKNVLKVLEQNYSVCIVVGGAQEALLSRVGSTELVLNKRK). The chain crosses the membrane as a helical span at residues 333 to 353 (GFIKLALETGNVNLVPIYAFG). At 354–461 (ETDCFNVLDT…YAGKELKIVE (108 aa)) the chain is on the cytoplasmic side.

The protein belongs to the diacylglycerol acyltransferase family.

The protein localises to the lipid droplet. It localises to the endoplasmic reticulum membrane. The catalysed reaction is an acyl-CoA + a 1,2-diacyl-sn-glycerol = a triacyl-sn-glycerol + CoA. It catalyses the reaction a 2-acylglycerol + an acyl-CoA = a 1,2-diacyl-sn-glycerol + CoA. It participates in glycerolipid metabolism; triacylglycerol biosynthesis. Its function is as follows. Catalyzes the terminal and only committed step in triacylglycerol (TAG) synthesis by using diacylglycerol (DAG) and fatty acyl-CoA as substrates. Required for storage lipid synthesis. Major DAG esterifying enzyme in stationary phase when TAG production is particularly active. Involved in lipid particle synthesis from the endoplasmic reticulum, promoting localized TAG production at discrete ER subdomains. This Eremothecium gossypii (strain ATCC 10895 / CBS 109.51 / FGSC 9923 / NRRL Y-1056) (Yeast) protein is Diacylglycerol O-acyltransferase 1 (DGA1).